The following is a 191-amino-acid chain: Probable rho GDP-dissociation inhibitor (191 aa).

The interval 1–22 (MSDHENTGENTSEYQYKQPPQK) is disordered. The segment covering 8-21 (GENTSEYQYKQPPQ) has biased composition (polar residues).

This sequence belongs to the Rho GDI family.

Its subcellular location is the cytoplasm. In terms of biological role, regulates the GDP/GTP exchange reaction of the Rho proteins by inhibiting the dissociation of GDP from them, and the subsequent binding of GTP to them. This is Probable rho GDP-dissociation inhibitor (rhi-1) from Caenorhabditis elegans.